We begin with the raw amino-acid sequence, 299 residues long: Endonuclease G, mitochondrial (299 aa).

A mitochondrion-targeting transit peptide spans 1–48 (MQLLRAGLTLALGAGLGAAAESWWRQRADARATPGLLSRLPVLPVAAA). Thr130 carries the phosphothreonine modification. Residue His143 is the Proton acceptor of the active site. Asn174 contributes to the Mg(2+) binding site. Positions 288-298 (AGSLKAITAGS) are essential for deoxyribonuclease activity. At Ser290 the chain carries Phosphoserine.

The protein belongs to the DNA/RNA non-specific endonuclease family. As to quaternary structure, homodimer; disulfide-linked. Homodimerization is essential for its activity. Interacts with YWHAG. Mg(2+) serves as cofactor. GSK3-beta-mediated dual phosphorylations at Thr-130 and Ser-290 is necessary for its interaction with YWHAG and the induction of autophagy.

Its subcellular location is the mitochondrion. Functionally, endonuclease that preferentially catalyzes the cleavage of double-stranded 5-hydroxymethylcytosine (5hmC)-modified DNA. The 5hmC-modified nucleotide does not increase the binding affinity, but instead increases the efficiency of cutting and specifies the site of cleavage for the modified DNAs. Shows significantly higher affinity for four- stranded Holliday junction over duplex and single-stranded DNAs. Promotes conservative recombination when the DNA is 5hmC-modified. Promotes autophagy through the suppression of mTOR by its phosphorylation-mediated interaction with YWHAG and its endonuclease activity-mediated DNA damage response. GSK3-beta mediated phosphorylation of ENDOG enhances its interaction with YWHAG, leading to the release of TSC2 and PIK3C3 from YWHAG resulting in mTOR pathway suppression and autophagy initiation. Promotes cleavage of mtDNA in response to oxidative and nitrosative stress, in turn inducing compensatory mtDNA replication. This Bos taurus (Bovine) protein is Endonuclease G, mitochondrial (ENDOG).